Consider the following 198-residue polypeptide: Phycocyanobilin lyase CpcT homolog (198 aa).

It belongs to the CpcT/CpeT biliprotein lyase family.

Functionally, covalently attaches a chromophore to Cys residue(s) of phycobiliproteins. In vitro is not seen to act as a chromophore lyase for ApcA1, ApcA2, ApcB, ApcD, ApcF, CpcB or PecB, the lyase activity is therefore unsure. The protein is Phycocyanobilin lyase CpcT homolog (cpcT2) of Nostoc sp. (strain PCC 7120 / SAG 25.82 / UTEX 2576).